A 255-amino-acid chain; its full sequence is Thiazole synthase (255 aa).

Lys-96 acts as the Schiff-base intermediate with DXP in catalysis. 1-deoxy-D-xylulose 5-phosphate contacts are provided by residues Gly-157, 183 to 184, and 205 to 206; these read AG and NS.

Belongs to the ThiG family. In terms of assembly, homotetramer. Forms heterodimers with either ThiH or ThiS.

The protein localises to the cytoplasm. The enzyme catalyses [ThiS sulfur-carrier protein]-C-terminal-Gly-aminoethanethioate + 2-iminoacetate + 1-deoxy-D-xylulose 5-phosphate = [ThiS sulfur-carrier protein]-C-terminal Gly-Gly + 2-[(2R,5Z)-2-carboxy-4-methylthiazol-5(2H)-ylidene]ethyl phosphate + 2 H2O + H(+). It participates in cofactor biosynthesis; thiamine diphosphate biosynthesis. Its function is as follows. Catalyzes the rearrangement of 1-deoxy-D-xylulose 5-phosphate (DXP) to produce the thiazole phosphate moiety of thiamine. Sulfur is provided by the thiocarboxylate moiety of the carrier protein ThiS. In vitro, sulfur can be provided by H(2)S. This Exiguobacterium sibiricum (strain DSM 17290 / CCUG 55495 / CIP 109462 / JCM 13490 / 255-15) protein is Thiazole synthase.